The sequence spans 752 residues: MTILTVQSSFSSSRVPVIKNANFDQIPSWVSLKSSTSSPSVKISHKQGQVENLHLVSLSKHRKLNEAFEFLQEMDKAGVSVSSYSYQCLFEACRELRSLSHGRLLHDRMRMGIENPSVLLQNCVLQMYCECRSLEDADKLFDEMSELNAVSRTTMISAYAEQGILDKAVGLFSGMLASGDKPPSSMYTTLLKSLVNPRALDFGRQIHAHVIRAGLCSNTSIETGIVNMYVKCGWLVGAKRVFDQMAVKKPVACTGLMVGYTQAGRARDALKLFVDLVTEGVEWDSFVFSVVLKACASLEELNLGKQIHACVAKLGLESEVSVGTPLVDFYIKCSSFESACRAFQEIREPNDVSWSAIISGYCQMSQFEEAVKTFKSLRSKNASILNSFTYTSIFQACSVLADCNIGGQVHADAIKRSLIGSQYGESALITMYSKCGCLDDANEVFESMDNPDIVAWTAFISGHAYYGNASEALRLFEKMVSCGMKPNSVTFIAVLTACSHAGLVEQGKHCLDTMLRKYNVAPTIDHYDCMIDIYARSGLLDEALKFMKNMPFEPDAMSWKCFLSGCWTHKNLELGEIAGEELRQLDPEDTAGYVLPFNLYTWAGKWEEAAEMMKLMNERMLKKELSCSWIQEKGKIHRFIVGDKHHPQTQEIYEKLKEFDGFMEGDMFQCNMTERREQLLDHSERLAIAFGLISVHGNAPAPIKVFKNLRACPDCHEFAKHVSLVTGHEIVIRDSRRFHHFKEGKCSCNDYW.

A chloroplast-targeting transit peptide spans 1-80 (MTILTVQSSF…LQEMDKAGVS (80 aa)). PPR repeat units lie at residues 47 to 81 (QGQV…GVSV), 82 to 116 (SSYS…IENP), 117 to 147 (SVLL…MSEL), 148 to 182 (NAVS…GDKP), 183 to 217 (PSSM…GLCS), 218 to 248 (NTSI…MAVK), 249 to 283 (KPVA…GVEW), 284 to 318 (DSFV…GLES), 319 to 349 (EVSV…IREP), 350 to 384 (NDVS…NASI), 386 to 420 (NSFT…SLIG), 421 to 451 (SQYG…MDNP), 452 to 486 (DIVA…GMKP), 487 to 522 (NSVT…NVAP), and 523 to 553 (TIDH…MPFE). Residues 558 to 633 (SWKCFLSGCW…ELSCSWIQEK (76 aa)) form a type E motif region. The interval 634–664 (GKIHRFIVGDKHHPQTQEIYEKLKEFDGFME) is type E(+) motif. Residues 665–752 (GDMFQCNMTE…EGKCSCNDYW (88 aa)) are type DYW motif.

The protein belongs to the PPR family. PCMP-H subfamily.

It localises to the plastid. The protein localises to the chloroplast. This is Pentatricopeptide repeat-containing protein At5g13270, chloroplastic (PCMP-H90) from Arabidopsis thaliana (Mouse-ear cress).